The sequence spans 162 residues: Protein SLM4 (162 aa).

A helical transmembrane segment spans residues 127–144 (LLLLFIAEGSFPYGLLVI).

As to quaternary structure, component of the GSE complex composed of GTR1, GTR2, SLM4, MEH1 and LTV1. Component of the EGO complex, at least composed of GTR2, SLM4 and MEH1.

The protein localises to the vacuole membrane. Functionally, component of the GSE complex, a GTPase complex required for intracellular sorting of GAP1 out of the endosome. Component of the EGO complex, a complex involved in the regulation of microautophagy. In Saccharomyces cerevisiae (strain ATCC 204508 / S288c) (Baker's yeast), this protein is Protein SLM4 (SLM4).